The following is a 292-amino-acid chain: Insulin-like growth factor-binding protein 3 (292 aa).

Positions Met-1–Ala-27 are cleaved as a signal peptide. The 84-residue stretch at Pro-36–Ala-119 folds into the IGFBP N-terminal domain. Intrachain disulfides connect Cys-40–Cys-69, Cys-43–Cys-71, Cys-51–Cys-72, Cys-60–Cys-75, Cys-83–Cys-96, and Cys-90–Cys-116. Residues Asn-118 and Asn-137 are each glycosylated (N-linked (GlcNAc...) asparagine). Disordered stretches follow at residues Tyr-128–Ser-152 and Lys-178–Gly-212. Position 149 is a phosphoserine (Ser-149). Basic and acidic residues predominate over residues Lys-178–Tyr-191. Positions Glu-192–Ser-203 are enriched in polar residues. The N-linked (GlcNAc...) asparagine glycan is linked to Asn-200. Position 202 is a phosphoserine (Ser-202). Positions Tyr-211–Cys-286 constitute a Thyroglobulin type-1 domain. 3 cysteine pairs are disulfide-bonded: Cys-214-Cys-241, Cys-252-Cys-263, and Cys-265-Cys-286.

As to quaternary structure, interacts with XLKD1. Binds IGF2 more than IGF1. Forms a ternary complex of about 140 to 150 kDa with IGF1 or IGF2 and a 85 kDa glycoprotein (ALS). Interacts with TMEM219. In terms of processing, phosphorylated by FAM20C in the extracellular medium.

The protein localises to the secreted. Functionally, IGF-binding proteins prolong the half-life of the IGFs and have been shown to either inhibit or stimulate the growth promoting effects of the IGFs on cell culture. They alter the interaction of IGFs with their cell surface receptors. Also exhibits IGF-independent antiproliferative and apoptotic effects mediated by its receptor TMEM219/IGFBP-3R. Promotes testicular germ cell apoptosis. This chain is Insulin-like growth factor-binding protein 3 (Igfbp3), found in Mus musculus (Mouse).